The primary structure comprises 130 residues: DNA-directed RNA polymerase subunit omega (130 aa).

2 disordered regions span residues 80-99 (PEPDTVPLIGSAGASVDADD) and 110-130 (EELLKGLEGLAPREEQPEEDE). The segment covering 110–124 (EELLKGLEGLAPREE) has biased composition (basic and acidic residues).

Belongs to the RNA polymerase subunit omega family. The RNAP catalytic core consists of 2 alpha, 1 beta, 1 beta' and 1 omega subunit. When a sigma factor is associated with the core the holoenzyme is formed, which can initiate transcription.

The catalysed reaction is RNA(n) + a ribonucleoside 5'-triphosphate = RNA(n+1) + diphosphate. In terms of biological role, promotes RNA polymerase assembly. Latches the N- and C-terminal regions of the beta' subunit thereby facilitating its interaction with the beta and alpha subunits. The sequence is that of DNA-directed RNA polymerase subunit omega from Nitrobacter hamburgensis (strain DSM 10229 / NCIMB 13809 / X14).